A 508-amino-acid polypeptide reads, in one-letter code: Photosystem II CP47 reaction center protein (508 aa).

6 helical membrane passes run 21 to 36 (SVHIMHTALVAGWAGS), 101 to 115 (IVFSGLCFLAAIWHW), 140 to 156 (GIHLFLSGVACFGFGVF), 203 to 218 (IAAGTLGILAGLFHLS), 237 to 252 (VLSSSIAAVFFAAFVV), and 457 to 472 (SFALLFFFGHIWHGAR).

Belongs to the PsbB/PsbC family. PsbB subfamily. As to quaternary structure, PSII is composed of 1 copy each of membrane proteins PsbA, PsbB, PsbC, PsbD, PsbE, PsbF, PsbH, PsbI, PsbJ, PsbK, PsbL, PsbM, PsbT, PsbX, PsbY, PsbZ, Psb30/Ycf12, at least 3 peripheral proteins of the oxygen-evolving complex and a large number of cofactors. It forms dimeric complexes. The cofactor is Binds multiple chlorophylls. PSII binds additional chlorophylls, carotenoids and specific lipids..

The protein localises to the plastid. It localises to the chloroplast thylakoid membrane. One of the components of the core complex of photosystem II (PSII). It binds chlorophyll and helps catalyze the primary light-induced photochemical processes of PSII. PSII is a light-driven water:plastoquinone oxidoreductase, using light energy to abstract electrons from H(2)O, generating O(2) and a proton gradient subsequently used for ATP formation. The sequence is that of Photosystem II CP47 reaction center protein from Jasminum nudiflorum (Winter jasmine).